A 337-amino-acid chain; its full sequence is Phosphate acyltransferase (337 aa).

It belongs to the PlsX family. Homodimer. Probably interacts with PlsY.

It localises to the cytoplasm. The enzyme catalyses a fatty acyl-[ACP] + phosphate = an acyl phosphate + holo-[ACP]. It functions in the pathway lipid metabolism; phospholipid metabolism. Catalyzes the reversible formation of acyl-phosphate (acyl-PO(4)) from acyl-[acyl-carrier-protein] (acyl-ACP). This enzyme utilizes acyl-ACP as fatty acyl donor, but not acyl-CoA. The chain is Phosphate acyltransferase from Listeria monocytogenes serotype 4b (strain F2365).